Here is a 229-residue protein sequence, read N- to C-terminus: Orotidine 5'-phosphate decarboxylase (229 aa).

Residues Asp-10, Lys-32, Asp-59–Thr-68, Thr-119, Arg-180, Gln-189, Gly-209, and Arg-210 each bind substrate. The Proton donor role is filled by Lys-61.

Belongs to the OMP decarboxylase family. Type 1 subfamily. Homodimer.

The enzyme catalyses orotidine 5'-phosphate + H(+) = UMP + CO2. It participates in pyrimidine metabolism; UMP biosynthesis via de novo pathway; UMP from orotate: step 2/2. In terms of biological role, catalyzes the decarboxylation of orotidine 5'-monophosphate (OMP) to uridine 5'-monophosphate (UMP). The chain is Orotidine 5'-phosphate decarboxylase from Legionella pneumophila (strain Lens).